We begin with the raw amino-acid sequence, 229 residues long: Demethylmenaquinone methyltransferase (229 aa).

S-adenosyl-L-methionine is bound by residues threonine 62, aspartate 80, 100-101, and serine 117; that span reads DG.

It belongs to the class I-like SAM-binding methyltransferase superfamily. MenG/UbiE family.

It catalyses the reaction a 2-demethylmenaquinol + S-adenosyl-L-methionine = a menaquinol + S-adenosyl-L-homocysteine + H(+). Its pathway is quinol/quinone metabolism; menaquinone biosynthesis; menaquinol from 1,4-dihydroxy-2-naphthoate: step 2/2. Methyltransferase required for the conversion of demethylmenaquinol (DMKH2) to menaquinol (MKH2). This is Demethylmenaquinone methyltransferase from Corynebacterium kroppenstedtii (strain DSM 44385 / JCM 11950 / CIP 105744 / CCUG 35717).